Reading from the N-terminus, the 302-residue chain is D-alanine--D-alanine ligase (302 aa).

The ATP-grasp domain maps to Lys-104–Glu-296. Residue Ala-130–Thr-183 coordinates ATP. Positions 251, 263, and 265 each coordinate Mg(2+).

It belongs to the D-alanine--D-alanine ligase family. It depends on Mg(2+) as a cofactor. Mn(2+) serves as cofactor.

It is found in the cytoplasm. The enzyme catalyses 2 D-alanine + ATP = D-alanyl-D-alanine + ADP + phosphate + H(+). It functions in the pathway cell wall biogenesis; peptidoglycan biosynthesis. Cell wall formation. The protein is D-alanine--D-alanine ligase of Rhodospirillum rubrum (strain ATCC 11170 / ATH 1.1.1 / DSM 467 / LMG 4362 / NCIMB 8255 / S1).